The chain runs to 138 residues: Large ribosomal subunit protein bL17 (138 aa).

This sequence belongs to the bacterial ribosomal protein bL17 family. As to quaternary structure, part of the 50S ribosomal subunit. Contacts protein L32.

The sequence is that of Large ribosomal subunit protein bL17 from Jannaschia sp. (strain CCS1).